Consider the following 151-residue polypeptide: Histone H2A.2.2 (151 aa).

An N-acetylmethionine modification is found at Met-1. The interval 129 to 151 (EKAEKAGTKAKSPKKATKSPKKA) is disordered. The span at 139–151 (KSPKKATKSPKKA) shows a compositional bias: basic residues. 2 consecutive short sequence motifs (SPKK motif) follow at residues 140–143 (SPKK) and 147–150 (SPKK).

Belongs to the histone H2A family. The nucleosome is a histone octamer containing two molecules each of H2A, H2B, H3 and H4 assembled in one H3-H4 heterotetramer and two H2A-H2B heterodimers. The octamer wraps approximately 147 bp of DNA. Phosphorylated within its C-terminal part, probably at the SPKK motifs.

Its subcellular location is the nucleus. It is found in the chromosome. In terms of biological role, core component of nucleosome. Nucleosomes wrap and compact DNA into chromatin, limiting DNA accessibility to the cellular machineries which require DNA as a template. Histones thereby play a central role in transcription regulation, DNA repair, DNA replication and chromosomal stability. DNA accessibility is regulated via a complex set of post-translational modifications of histones, also called histone code, and nucleosome remodeling. This chain is Histone H2A.2.2, found in Triticum aestivum (Wheat).